Consider the following 445-residue polypeptide: Tubulin beta-7 chain (445 aa).

The GTP site is built by Gln-11, Glu-69, Ser-138, Gly-142, Thr-143, Gly-144, Asn-204, and Asn-226. A Mg(2+)-binding site is contributed by Glu-69. Positions 421 to 445 (EYQQYQDATAEDEEYEEEEEEEEET) are disordered. Residues 429-445 (TAEDEEYEEEEEEEEET) are compositionally biased toward acidic residues.

It belongs to the tubulin family. As to quaternary structure, dimer of alpha and beta chains. A typical microtubule is a hollow water-filled tube with an outer diameter of 25 nm and an inner diameter of 15 nM. Alpha-beta heterodimers associate head-to-tail to form protofilaments running lengthwise along the microtubule wall with the beta-tubulin subunit facing the microtubule plus end conferring a structural polarity. Microtubules usually have 13 protofilaments but different protofilament numbers can be found in some organisms and specialized cells. Mg(2+) serves as cofactor.

The protein resides in the cytoplasm. Its subcellular location is the cytoskeleton. Its function is as follows. Tubulin is the major constituent of microtubules, a cylinder consisting of laterally associated linear protofilaments composed of alpha- and beta-tubulin heterodimers. Microtubules grow by the addition of GTP-tubulin dimers to the microtubule end, where a stabilizing cap forms. Below the cap, tubulin dimers are in GDP-bound state, owing to GTPase activity of alpha-tubulin. The sequence is that of Tubulin beta-7 chain (TUBB7) from Zea mays (Maize).